A 144-amino-acid polypeptide reads, in one-letter code: Large ribosomal subunit protein uL15 (144 aa).

The segment at 1–57 (MELNNIKPADGAKKDKRRVGRGIGSGLGKTAGRGHKGQKSRAGGFHKVGFEGGQMPM) is disordered. Gly residues predominate over residues 21-31 (RGIGSGLGKTA).

The protein belongs to the universal ribosomal protein uL15 family. As to quaternary structure, part of the 50S ribosomal subunit.

Its function is as follows. Binds to the 23S rRNA. The protein is Large ribosomal subunit protein uL15 of Thiobacillus denitrificans (strain ATCC 25259 / T1).